The chain runs to 445 residues: Phosphoglucosamine mutase (445 aa).

Serine 99 (phosphoserine intermediate) is an active-site residue. 4 residues coordinate Mg(2+): serine 99, aspartate 242, aspartate 244, and aspartate 246. A Phosphoserine modification is found at serine 99.

Belongs to the phosphohexose mutase family. Mg(2+) serves as cofactor. In terms of processing, activated by phosphorylation.

It carries out the reaction alpha-D-glucosamine 1-phosphate = D-glucosamine 6-phosphate. Its function is as follows. Catalyzes the conversion of glucosamine-6-phosphate to glucosamine-1-phosphate. The polypeptide is Phosphoglucosamine mutase (Campylobacter lari (strain RM2100 / D67 / ATCC BAA-1060)).